Here is a 478-residue protein sequence, read N- to C-terminus: Trigger factor (478 aa).

Residues 1 to 41 form a disordered region; that stretch reads MAELADAPDLGSGARKGVRVRLPPPAPHKNGGKNESRGSGQ. A PPIase FKBP-type domain is found at 197-279; sequence GDMLVVEYEV…IKEIKKKVLP (83 aa). A compositionally biased stretch (basic and acidic residues) spans 455–472; the sequence is VEQKQEEEKKEEKEEVKN. The tract at residues 455–478 is disordered; it reads VEQKQEEEKKEEKEEVKNESQGNT.

This sequence belongs to the FKBP-type PPIase family. Tig subfamily.

It is found in the cytoplasm. The catalysed reaction is [protein]-peptidylproline (omega=180) = [protein]-peptidylproline (omega=0). Its function is as follows. Involved in protein export. Acts as a chaperone by maintaining the newly synthesized protein in an open conformation. Functions as a peptidyl-prolyl cis-trans isomerase. In Aquifex aeolicus (strain VF5), this protein is Trigger factor.